The following is a 196-amino-acid chain: MSDSLNAAALDQLFRTARTQNAFADTPVSQEVLRELYELVKWGSTAANSGPARFVFVTSADGKAKLKPALSEGNAAKTLAAPVTVIVAHDEDFHEKLPYLFPHADAKSWFDGPREGRAESAFRNGSLQGAYLILAARALGLDAGPMSGFDNAKVDAAFFAGTPIKSNFLVNLGYGDPAGLFPRSPRLSFDEAARFE.

Belongs to the nitroreductase family. HadB/RutE subfamily. FMN serves as cofactor.

The chain is Putative NADH dehydrogenase/NAD(P)H nitroreductase PXO_03909 from Xanthomonas oryzae pv. oryzae (strain PXO99A).